The sequence spans 507 residues: Probable Xaa-Pro aminopeptidase TRV_02643 (507 aa).

The Mn(2+) site is built by Asp-275, Asp-286, Glu-434, and Glu-478.

Belongs to the peptidase M24B family. Mn(2+) serves as cofactor.

The enzyme catalyses Release of any N-terminal amino acid, including proline, that is linked to proline, even from a dipeptide or tripeptide.. Functionally, catalyzes the removal of a penultimate prolyl residue from the N-termini of peptides. This chain is Probable Xaa-Pro aminopeptidase TRV_02643, found in Trichophyton verrucosum (strain HKI 0517).